We begin with the raw amino-acid sequence, 394 residues long: Phosphorylated adapter RNA export protein (394 aa).

Composition is skewed to acidic residues over residues 1-18 (MAQE…DSDS) and 65-77 (SSEE…DDDS). The interval 1 to 109 (MAQEAGDMDD…DQSSQKPPIA (109 aa)) is disordered. Ala-2 bears the N-acetylalanine mark. Residues 2–329 (AQEAGDMDDG…KAARKRRIQV (328 aa)) are necessary for interaction with CBP80. A phosphoserine mark is found at Ser-14, Ser-16, Ser-65, Ser-66, Ser-69, and Ser-73. Residues 81–84 (KRKR) carry the Nuclear localization signal motif. Residues 130 to 139 (VATELGILGM) carry the Nuclear export signal motif. The segment covering 178-193 (YMHGGKKTGPKEEENG) has biased composition (basic and acidic residues). The interval 178 to 208 (YMHGGKKTGPKEEENGQGHPKRKRPVKDRVG) is disordered. Residues 198–201 (KRKR) carry the Nuclear localization signal motif. Ser-226 bears the Phosphoserine mark. The interval 228-328 (ERVADEISFR…KKAARKRRIQ (101 aa)) is sufficient for poly U RNA-binding. Residues 279–287 (GSRRRTPGG) are necessary for poly U RNA-binding and snRNA export. Thr-296 carries the phosphothreonine modification. Residues Ser-356 and Ser-368 each carry the phosphoserine modification. The tract at residues 365–394 (LDESQEGHGETKLDAEEAIEVDHSHDLDMF) is disordered. A compositionally biased stretch (basic and acidic residues) spans 369–394 (QEGHGETKLDAEEAIEVDHSHDLDMF).

The protein belongs to the PHAX family. Found in a U snRNA export complex with PHAX/RNUXA, NCBP1/CBP80, NCBP2/CBP20, RAN, XPO1 and m7G-capped RNA. Part of a precomplex with PHAX/RNUXA, NCBP1/CBP80, NCBP2/CBP20 and m7G-capped RNA. Interacts with NCBP1/CBP80. Found in a complex with snoRNA, Interacts with NCBP2/CBP20. Interacts with DDX39A; this interaction stimulates PHAX RNA binding activity. Post-translationally, phosphorylated in the nucleus. Dephosphorylated in the cytoplasm.

The protein resides in the nucleus. The protein localises to the nucleoplasm. It is found in the cajal body. It localises to the cytoplasm. Functionally, a phosphoprotein adapter involved in the XPO1-mediated U snRNA export from the nucleus. Bridge components required for U snRNA export, the cap binding complex (CBC)-bound snRNA on the one hand and the GTPase Ran in its active GTP-bound form together with the export receptor XPO1 on the other. Its phosphorylation in the nucleus is required for U snRNA export complex assembly and export, while its dephosphorylation in the cytoplasm causes export complex disassembly. It is recycled back to the nucleus via the importin alpha/beta heterodimeric import receptor. The directionality of nuclear export is thought to be conferred by an asymmetric distribution of the GTP- and GDP-bound forms of Ran between the cytoplasm and nucleus. Its compartmentalized phosphorylation cycle may also contribute to the directionality of export. Binds strongly to m7G-capped U1 and U5 small nuclear RNAs (snRNAs) in a sequence-unspecific manner and phosphorylation-independent manner. Also plays a role in the biogenesis of U3 small nucleolar RNA (snoRNA). Involved in the U3 snoRNA transport from nucleoplasm to Cajal bodies. Binds strongly to m7G-capped U3, U8 and U13 precursor snoRNAs and weakly to trimethylated (TMG)-capped U3, U8 and U13 snoRNAs. Also binds to telomerase RNA. The chain is Phosphorylated adapter RNA export protein (PHAX) from Bos taurus (Bovine).